A 123-amino-acid polypeptide reads, in one-letter code: Glutaredoxin-like protein (123 aa).

The 97-residue stretch at 27 to 123 (INEVEESITN…GTLFNDLKKK (97 aa)) folds into the Glutaredoxin domain.

This sequence belongs to the glutaredoxin family.

In Dictyostelium discoideum (Social amoeba), this protein is Glutaredoxin-like protein (grxB).